Consider the following 489-residue polypeptide: Betaine aldehyde dehydrogenase (489 aa).

The K(+) site is built by threonine 26 and aspartate 93. An NAD(+)-binding site is contributed by 150-152 (GAW). Lysine 162 acts as the Charge relay system in catalysis. 176–179 (KPSE) lines the NAD(+) pocket. Valine 180 contributes to the K(+) binding site. 229-232 (GVET) serves as a coordination point for NAD(+). Residue leucine 245 coordinates K(+). Glutamate 251 acts as the Proton acceptor in catalysis. Residues glycine 253, cysteine 285, and glutamate 386 each contribute to the NAD(+) site. Residue cysteine 285 is the Nucleophile of the active site. Cysteine sulfenic acid (-SOH) is present on cysteine 285. Residues lysine 456 and glycine 459 each contribute to the K(+) site. Glutamate 463 (charge relay system) is an active-site residue.

It belongs to the aldehyde dehydrogenase family. As to quaternary structure, dimer of dimers. K(+) is required as a cofactor.

The enzyme catalyses betaine aldehyde + NAD(+) + H2O = glycine betaine + NADH + 2 H(+). It participates in amine and polyamine biosynthesis; betaine biosynthesis via choline pathway; betaine from betaine aldehyde: step 1/1. In terms of biological role, involved in the biosynthesis of the osmoprotectant glycine betaine. Catalyzes the irreversible oxidation of betaine aldehyde to the corresponding acid. This is Betaine aldehyde dehydrogenase from Paraburkholderia phymatum (strain DSM 17167 / CIP 108236 / LMG 21445 / STM815) (Burkholderia phymatum).